The primary structure comprises 266 residues: uncharacterized protein (266 aa).

This is an uncharacterized protein from Methanocaldococcus jannaschii (strain ATCC 43067 / DSM 2661 / JAL-1 / JCM 10045 / NBRC 100440) (Methanococcus jannaschii).